The chain runs to 317 residues: Cell division protein FtsQ (317 aa).

Residues 1-63 are Cytoplasmic-facing; the sequence is MDGGGRFVFA…RIHIPAHTGT (63 aa). The chain crosses the membrane as a helical span at residues 64–82; it reads ISAVAFYAMIGLYGMSLGG. Topologically, residues 83–317 are periplasmic; that stretch reads HTNIVTQTTT…KALKKAEKNT (235 aa). The POTRA domain maps to 97-165; sequence FAVEDVKVSG…KTVEVRLKER (69 aa).

The protein belongs to the FtsQ/DivIB family. FtsQ subfamily.

It is found in the cell inner membrane. Its function is as follows. Essential cell division protein. The protein is Cell division protein FtsQ of Agrobacterium fabrum (strain C58 / ATCC 33970) (Agrobacterium tumefaciens (strain C58)).